We begin with the raw amino-acid sequence, 356 residues long: DNA polymerase IV (356 aa).

The region spanning 4–185 (IIHIDMDCYY…LALGKIPGVG (182 aa)) is the UmuC domain. Mg(2+) contacts are provided by aspartate 8 and aspartate 103. Glutamate 104 is an active-site residue.

Belongs to the DNA polymerase type-Y family. As to quaternary structure, monomer. Mg(2+) serves as cofactor.

The protein localises to the cytoplasm. It carries out the reaction DNA(n) + a 2'-deoxyribonucleoside 5'-triphosphate = DNA(n+1) + diphosphate. Poorly processive, error-prone DNA polymerase involved in untargeted mutagenesis. Copies undamaged DNA at stalled replication forks, which arise in vivo from mismatched or misaligned primer ends. These misaligned primers can be extended by PolIV. Exhibits no 3'-5' exonuclease (proofreading) activity. May be involved in translesional synthesis, in conjunction with the beta clamp from PolIII. This Pseudoalteromonas atlantica (strain T6c / ATCC BAA-1087) protein is DNA polymerase IV.